The chain runs to 39 residues: Natriuretic peptide CnNP-b (39 aa).

Positions 1–8 (SGSKTATK) are excised as a propeptide. Cysteines 12 and 28 form a disulfide. Positions 20-39 (IGSTSGMGCGGVPKPTPGGS) are disordered.

The protein belongs to the natriuretic peptide family. In terms of tissue distribution, expressed by the venom gland.

The protein localises to the secreted. Functionally, snake venom natriuretic peptide that targets both NPR1 and NPR2. Exhibits hypotensive and vasodepressor activities. This is Natriuretic peptide CnNP-b from Cryptophis nigrescens (Eastern small-eyed snake).